We begin with the raw amino-acid sequence, 547 residues long: ATP synthase subunit alpha (547 aa).

Position 173 to 180 (G173 to T180) interacts with ATP. Positions P526–G547 are disordered. Acidic residues predominate over residues A528 to Q538.

The protein belongs to the ATPase alpha/beta chains family. F-type ATPases have 2 components, CF(1) - the catalytic core - and CF(0) - the membrane proton channel. CF(1) has five subunits: alpha(3), beta(3), gamma(1), delta(1), epsilon(1). CF(0) has three main subunits: a(1), b(2) and c(9-12). The alpha and beta chains form an alternating ring which encloses part of the gamma chain. CF(1) is attached to CF(0) by a central stalk formed by the gamma and epsilon chains, while a peripheral stalk is formed by the delta and b chains.

The protein localises to the cell membrane. It carries out the reaction ATP + H2O + 4 H(+)(in) = ADP + phosphate + 5 H(+)(out). In terms of biological role, produces ATP from ADP in the presence of a proton gradient across the membrane. The alpha chain is a regulatory subunit. The chain is ATP synthase subunit alpha from Nocardioides sp. (strain ATCC BAA-499 / JS614).